The chain runs to 174 residues: MQMMSLEKEAAMETKTAEQRSLDYRNAMARLGAAVNIVTTDGAAGRAGFAATAVCSVSDNPPTLLVCLNRNASAYKVVKANGVICINTLAAHHEVLSTLFGGKTPAEERFAAGSWGVLETGAPVLEDALVSFDCRIREAHDGGTHDILICTVVDMKINAGDEALMYFNRRYRVL.

This sequence belongs to the non-flavoprotein flavin reductase family. RutF subfamily.

The catalysed reaction is FMNH2 + NAD(+) = FMN + NADH + 2 H(+). Its function is as follows. Catalyzes the reduction of FMN to FMNH2 which is used to reduce pyrimidine by RutA via the Rut pathway. The polypeptide is FMN reductase (NADH) RutF (Agrobacterium fabrum (strain C58 / ATCC 33970) (Agrobacterium tumefaciens (strain C58))).